The chain runs to 477 residues: Ribulose bisphosphate carboxylase large chain (477 aa).

The propeptide occupies 1 to 2 (MS). P3 carries the post-translational modification N-acetylproline. Residue K14 is modified to N6,N6,N6-trimethyllysine. Residues N123 and T173 each contribute to the substrate site. K175 serves as the catalytic Proton acceptor. Substrate is bound at residue K177. Residues K201, D203, and E204 each contribute to the Mg(2+) site. Residue K201 is modified to N6-carboxylysine. The active-site Proton acceptor is the H294. 3 residues coordinate substrate: R295, H327, and S379.

This sequence belongs to the RuBisCO large chain family. Type I subfamily. Heterohexadecamer of 8 large chains and 8 small chains; disulfide-linked. The disulfide link is formed within the large subunit homodimers. Mg(2+) serves as cofactor. Post-translationally, the disulfide bond which can form in the large chain dimeric partners within the hexadecamer appears to be associated with oxidative stress and protein turnover.

The protein resides in the plastid. It is found in the chloroplast. The catalysed reaction is 2 (2R)-3-phosphoglycerate + 2 H(+) = D-ribulose 1,5-bisphosphate + CO2 + H2O. It carries out the reaction D-ribulose 1,5-bisphosphate + O2 = 2-phosphoglycolate + (2R)-3-phosphoglycerate + 2 H(+). Its function is as follows. RuBisCO catalyzes two reactions: the carboxylation of D-ribulose 1,5-bisphosphate, the primary event in carbon dioxide fixation, as well as the oxidative fragmentation of the pentose substrate in the photorespiration process. Both reactions occur simultaneously and in competition at the same active site. This chain is Ribulose bisphosphate carboxylase large chain, found in Hyophorbe lagenicaulis (Bottle palm).